We begin with the raw amino-acid sequence, 386 residues long: MSGISLGIPDGPPPVLAPRRKTRQLMVGGVGVGSDHPISVQSMTTTKTHDVNATLQQIAQLTASGCDIVRVACPKTVDAEALPAIAAKSPIPVIADIHFQPKYIFSAIDAGCAAVRVNPGNIKEFDGRVKEVAKAAGDAGIPIRIGVNAGSLDKRIMEKYGKATPEALVESALWEASLFEEHGYGDIAISVKHNDPVVMVEAYRQLAAQSDYPLHLGVTEAGPAFQGTIKSSVAFGALLAEGIGDTIRVSLSADPVEEIKVGDQILQSLNLRPRKLEIVSCPSCGRAQVDVYKLADEVTAGLEGMEFPLRVAVMGCVVNGPGEARDADLGVASGNGKGQIFVKGEVIKTVPEDQIVETLIEEAMRIAEEEGLEAVEGQKAEVRVTK.

[4Fe-4S] cluster-binding residues include C281, C284, C316, and E323.

Belongs to the IspG family. The cofactor is [4Fe-4S] cluster.

It carries out the reaction (2E)-4-hydroxy-3-methylbut-2-enyl diphosphate + oxidized [flavodoxin] + H2O + 2 H(+) = 2-C-methyl-D-erythritol 2,4-cyclic diphosphate + reduced [flavodoxin]. It functions in the pathway isoprenoid biosynthesis; isopentenyl diphosphate biosynthesis via DXP pathway; isopentenyl diphosphate from 1-deoxy-D-xylulose 5-phosphate: step 5/6. In terms of biological role, converts 2C-methyl-D-erythritol 2,4-cyclodiphosphate (ME-2,4cPP) into 1-hydroxy-2-methyl-2-(E)-butenyl 4-diphosphate. The sequence is that of 4-hydroxy-3-methylbut-2-en-1-yl diphosphate synthase (flavodoxin) from Corynebacterium jeikeium (strain K411).